Here is a 303-residue protein sequence, read N- to C-terminus: Imidazoleglycerol-phosphate dehydratase (303 aa).

The protein belongs to the imidazoleglycerol-phosphate dehydratase family.

The protein localises to the cytoplasm. The catalysed reaction is D-erythro-1-(imidazol-4-yl)glycerol 3-phosphate = 3-(imidazol-4-yl)-2-oxopropyl phosphate + H2O. It functions in the pathway amino-acid biosynthesis; L-histidine biosynthesis; L-histidine from 5-phospho-alpha-D-ribose 1-diphosphate: step 6/9. This Neisseria gonorrhoeae (strain ATCC 700825 / FA 1090) protein is Imidazoleglycerol-phosphate dehydratase.